We begin with the raw amino-acid sequence, 500 residues long: Polyamine oxidase 1 (500 aa).

An N-terminal signal peptide occupies residues 1–28 (MSSSPSFGLLAVAALLLALSLAQHGSLA). Residues 42–43 (MS), Glu-63, Arg-71, and 87–88 (NW) each bind FAD. Glu-90 lines the substrate pocket. The N-linked (GlcNAc...) asparagine glycan is linked to Asn-105. Glu-198 lines the substrate pocket. Positions 265, 427, and 458 each coordinate FAD. Gly-466 contacts substrate. 467-468 (YV) is an FAD binding site. Cys-485 and Cys-491 are disulfide-bonded.

Belongs to the flavin monoamine oxidase family. As to quaternary structure, monomer. FAD is required as a cofactor.

The protein resides in the secreted. Its subcellular location is the extracellular space. The protein localises to the apoplast. It is found in the cell wall. It carries out the reaction spermidine + O2 + H2O = 4-aminobutanal + propane-1,3-diamine + H2O2. It catalyses the reaction N(8)-acetylspermidine + O2 + H2O = 4-acetamidobutanal + propane-1,3-diamine + H2O2. The catalysed reaction is spermine + O2 + H2O = N-(3-aminopropyl)-4-aminobutanal + propane-1,3-diamine + H2O2. The enzyme catalyses N(1)-acetylspermine + O2 + H2O = N-(3-acetamidopropyl)-4-aminobutanal + propane-1,3-diamine + H2O2. Its pathway is amine and polyamine degradation; spermine degradation. Flavoenzyme involved in polyamine back-conversion. Catalyzes the oxidation of the secondary amino group of polyamines, such as spermine, spermidine and their acetyl derivatives. Plays an important role in the regulation of polyamine intracellular concentration. This is Polyamine oxidase 1 from Zea mays (Maize).